The sequence spans 187 residues: MYMQVETRTSTRLHLKRAPGIRSWSLLVGILSTGLAAAYYSGDSLGWKLFYVTGCLFVAVQNLEDWEEAIFNKSTGKVILKTFSLYKKLLTLLRAGHDQVVVLLKDIQDVNVEEEKVRYFGKGYMVVLRFATGFSHPLTQSAVMGRRSDVEAIAKLITSFLELHRLESPSERSQSSDSEPDGPGGQS.

A helical membrane pass occupies residues 20-42; that stretch reads GIRSWSLLVGILSTGLAAAYYSG. Residues 167–187 form a disordered region; that stretch reads ESPSERSQSSDSEPDGPGGQS. Phosphoserine is present on residues Ser168 and Ser170.

It belongs to the CYBC1 family. Interacts with CYBB; CYBC1 may act as a chaperone stabilizing Cytochrome b-245 heterodimer.

The protein localises to the endoplasmic reticulum membrane. Its function is as follows. Functions as a chaperone necessary for a stable expression of the CYBA and CYBB subunits of the cytochrome b-245 heterodimer. Controls the phagocyte respiratory burst and is essential for innate immunity. This Rattus norvegicus (Rat) protein is Cytochrome b-245 chaperone 1.